A 463-amino-acid polypeptide reads, in one-letter code: Adenosylhomocysteinase (463 aa).

The substrate site is built by Thr54, Asp128, and Glu189. 190-192 (TTT) lines the NAD(+) pocket. Substrate contacts are provided by Lys219 and Asp223. NAD(+)-binding positions include Asn224, 253–258 (GYGDVG), Glu276, Asn311, 332–334 (IGH), and Asn377.

The protein belongs to the adenosylhomocysteinase family. Requires NAD(+) as cofactor.

Its subcellular location is the cytoplasm. It carries out the reaction S-adenosyl-L-homocysteine + H2O = L-homocysteine + adenosine. It functions in the pathway amino-acid biosynthesis; L-homocysteine biosynthesis; L-homocysteine from S-adenosyl-L-homocysteine: step 1/1. Functionally, may play a key role in the regulation of the intracellular concentration of adenosylhomocysteine. This Cereibacter sphaeroides (Rhodobacter sphaeroides) protein is Adenosylhomocysteinase.